The following is a 118-amino-acid chain: Large ribosomal subunit protein bL20 (118 aa).

It belongs to the bacterial ribosomal protein bL20 family.

Binds directly to 23S ribosomal RNA and is necessary for the in vitro assembly process of the 50S ribosomal subunit. It is not involved in the protein synthesizing functions of that subunit. The polypeptide is Large ribosomal subunit protein bL20 (Enterobacter sp. (strain 638)).